Here is a 421-residue protein sequence, read N- to C-terminus: GTPase Obg (421 aa).

In terms of domain architecture, Obg spans Met1–Leu158. The region spanning Ala159–Lys324 is the OBG-type G domain. Residues Gly165 to Ser172, Phe190 to Lys194, Asp211 to Gly214, Asn278 to Asp281, and Ser305 to Leu307 each bind GTP. The Mg(2+) site is built by Ser172 and Thr192. An OCT domain is found at Thr342–Thr421.

It belongs to the TRAFAC class OBG-HflX-like GTPase superfamily. OBG GTPase family. Monomer. It depends on Mg(2+) as a cofactor.

It is found in the cytoplasm. An essential GTPase which binds GTP, GDP and possibly (p)ppGpp with moderate affinity, with high nucleotide exchange rates and a fairly low GTP hydrolysis rate. Plays a role in control of the cell cycle, stress response, ribosome biogenesis and in those bacteria that undergo differentiation, in morphogenesis control. The sequence is that of GTPase Obg from Phytoplasma mali (strain AT).